The following is a 353-amino-acid chain: Serine proteinase inhibitor 1 (353 aa).

The protein belongs to the serpin family. Poxviruses subfamily.

It localises to the host cytoplasm. In terms of biological role, plays a role in mediating viral host range. May act to inhibit a caspase independent form of apoptosis to allow efficient virus replication in infected cells. In Vaccinia virus (strain Western Reserve) (VACV), this protein is Serine proteinase inhibitor 1 (OPG208).